Reading from the N-terminus, the 277-residue chain is UBX domain-containing protein 10 (277 aa).

The tract at residues 1-102 (MAIEAPVNFA…APDEMPELLL (102 aa)) is disordered. A compositionally biased stretch (polar residues) spans 16 to 31 (TVVSTAGDSSTWQPSS). Residues 35–50 (HVIRPKSAKGRKRPNL) show a composition bias toward basic residues. Residues 60-77 (SPSALSSSPPPRSSGSPS) are compositionally biased toward low complexity. Position 88 is a phosphoserine (Ser88). Positions 191–268 (DEEPRLLLAV…GILHKSVLGI (78 aa)) constitute a UBX domain.

It belongs to the UBXN10 family. In terms of assembly, interacts with CLUAP1; the interaction is direct and mediates interaction with the intraflagellar transport complex B (IFT-B). Interacts with VCP; the interaction is direct.

It localises to the cell projection. Its subcellular location is the cilium. Functionally, VCP/p97-binding protein required for ciliogenesis. Acts as a tethering factor that facilitates recruitment of VCP/p97 to the intraflagellar transport complex B (IFT-B) in cilia. UBX domain-containing proteins act as tethering factors for VCP/p97 and may specify substrate specificity of VCP/p97. The chain is UBX domain-containing protein 10 from Mus musculus (Mouse).